The following is a 179-amino-acid chain: Coiled-coil domain-containing protein 32 (179 aa).

Residues 75–98 (EVYLASLEKKLRRIKGLNEEVTSK) adopt a coiled-coil conformation. The tract at residues 157–179 (FLIPPESQAEKPEARDEPAAAEQ) is disordered. Basic and acidic residues predominate over residues 164–179 (QAEKPEARDEPAAAEQ).

Interacts with AP2S1; the interaction is direct and mediates association with adaptor protein complex 2 (AP-2).

The protein localises to the membrane. It is found in the coated pit. Functionally, regulates clathrin-mediated endocytsois of cargos such as transferrin probably through the association and modulation of adaptor protein complex 2 (AP-2). Has a role in ciliogenesis. Required for proper cephalic and left/right axis development. The sequence is that of Coiled-coil domain-containing protein 32 (Ccdc32) from Rattus norvegicus (Rat).